The following is a 430-amino-acid chain: Histidinol dehydrogenase (430 aa).

NAD(+)-binding residues include Tyr-130, Gln-191, and Asn-214. Residues Ser-237, Gln-259, and His-262 each contribute to the substrate site. Residues Gln-259 and His-262 each contribute to the Zn(2+) site. Residues Glu-327 and His-328 each act as proton acceptor in the active site. Substrate is bound by residues His-328, Asp-361, Glu-415, and His-420. Asp-361 is a Zn(2+) binding site. His-420 serves as a coordination point for Zn(2+).

Belongs to the histidinol dehydrogenase family. Zn(2+) is required as a cofactor.

The enzyme catalyses L-histidinol + 2 NAD(+) + H2O = L-histidine + 2 NADH + 3 H(+). Its pathway is amino-acid biosynthesis; L-histidine biosynthesis; L-histidine from 5-phospho-alpha-D-ribose 1-diphosphate: step 9/9. Its function is as follows. Catalyzes the sequential NAD-dependent oxidations of L-histidinol to L-histidinaldehyde and then to L-histidine. The protein is Histidinol dehydrogenase (hisD) of Zymomonas mobilis subsp. mobilis (strain ATCC 31821 / ZM4 / CP4).